The chain runs to 625 residues: Alpha-1,3-galactosidase A (625 aa).

The first 32 residues, 1–32 (MAHGCSGGAMSRFVFLGVALALLGGATSPAAA), serve as a signal peptide directing secretion. PbH1 repeat units follow at residues 342 to 364 (KGKV…NIHG), 460 to 482 (TPSV…LVTT), 483 to 505 (RKPV…YVSA), 516 to 537 (VADL…IFVE), and 573 to 611 (VGGF…RIAR).

This sequence belongs to the glycosyl hydrolase 110 family. A subfamily.

It catalyses the reaction Hydrolysis of terminal, non-reducing branched (1-&gt;3)-alpha-D-galactosidic residues, producing free D-galactose.. It carries out the reaction Hydrolysis of terminal, non-reducing alpha-D-galactose residues in alpha-D-galactosides, including galactose oligosaccharides, galactomannans and galactolipids.. Alpha-galactosidase that specifically removes branched alpha-1,3-linked galactose residues present in blood group B antigens. Has no activity toward linear alpha-1,3-linked galactose residues. This is Alpha-1,3-galactosidase A (glaA) from Streptomyces avermitilis (strain ATCC 31267 / DSM 46492 / JCM 5070 / NBRC 14893 / NCIMB 12804 / NRRL 8165 / MA-4680).